Consider the following 245-residue polypeptide: MADS-box transcription factor 55 (245 aa).

The MADS-box domain occupies 1 to 61 (MARERREIRR…GKLSQFASSN (61 aa)). A K-box domain is found at 109–199 (LQLEHSKCSS…RDQMPQVPTA (91 aa)). A disordered region spans residues 197-245 (PTAGLAVPDTENVLTEDGQSSESVMTALNSGSSQDNDDGSDISLKLGLP). Polar residues predominate over residues 213–224 (DGQSSESVMTAL).

Expressed in roots, shoots and developing panicles. Expressed in shoots.

The protein localises to the nucleus. Transcription factor that acts as a negative regulator of brassinosteroid signaling. This is MADS-box transcription factor 55 (MADS55) from Oryza sativa subsp. japonica (Rice).